A 1101-amino-acid chain; its full sequence is MRGRICFLAIVILCSFSFILVRSLNEEGRVLLEFKAFLNDSNGYLASWNQLDSNPCNWTGIACTHLRTVTSVDLNGMNLSGTLSPLICKLHGLRKLNVSTNFISGPIPQDLSLCRSLEVLDLCTNRFHGVIPIQLTMIITLKKLYLCENYLFGSIPRQIGNLSSLQELVIYSNNLTGVIPPSMAKLRQLRIIRAGRNGFSGVIPSEISGCESLKVLGLAENLLEGSLPKQLEKLQNLTDLILWQNRLSGEIPPSVGNISRLEVLALHENYFTGSIPREIGKLTKMKRLYLYTNQLTGEIPREIGNLIDAAEIDFSENQLTGFIPKEFGHILNLKLLHLFENILLGPIPRELGELTLLEKLDLSINRLNGTIPQELQFLPYLVDLQLFDNQLEGKIPPLIGFYSNFSVLDMSANSLSGPIPAHFCRFQTLILLSLGSNKLSGNIPRDLKTCKSLTKLMLGDNQLTGSLPIELFNLQNLTALELHQNWLSGNISADLGKLKNLERLRLANNNFTGEIPPEIGNLTKIVGFNISSNQLTGHIPKELGSCVTIQRLDLSGNKFSGYIAQELGQLVYLEILRLSDNRLTGEIPHSFGDLTRLMELQLGGNLLSENIPVELGKLTSLQISLNISHNNLSGTIPDSLGNLQMLEILYLNDNKLSGEIPASIGNLMSLLICNISNNNLVGTVPDTAVFQRMDSSNFAGNHGLCNSQRSHCQPLVPHSDSKLNWLINGSQRQKILTITCIVIGSVFLITFLGLCWTIKRREPAFVALEDQTKPDVMDSYYFPKKGFTYQGLVDATRNFSEDVVLGRGACGTVYKAEMSGGEVIAVKKLNSRGEGASSDNSFRAEISTLGKIRHRNIVKLYGFCYHQNSNLLLYEYMSKGSLGEQLQRGEKNCLLDWNARYRIALGAAEGLCYLHHDCRPQIVHRDIKSNNILLDERFQAHVGDFGLAKLIDLSYSKSMSAVAGSYGYIAPEYAYTMKVTEKCDIYSFGVVLLELITGKPPVQPLEQGGDLVNWVRRSIRNMIPTIEMFDARLDTNDKRTVHEMSLVLKIALFCTSNSPASRPTMREVVAMITEARGSSSLSSSSITSETPLEEANSSKEI.

A signal peptide spans 1–23 (MRGRICFLAIVILCSFSFILVRS). Over 24–734 (LNEEGRVLLE…WLINGSQRQK (711 aa)) the chain is Extracellular. N-linked (GlcNAc...) asparagine glycosylation is found at Asn-39, Asn-57, Asn-78, and Asn-97. LRR repeat units follow at residues 66–90 (LRTV…ICKL), 91–115 (HGLR…SLCR), 117–137 (LEVL…QLTM), 138–162 (IITL…IGNL), 163–186 (SSLQ…MAKL), 188–210 (QLRI…ISGC), 211–234 (ESLK…LEKL), 235–258 (QNLT…VGNI), 260–282 (RLEV…IGKL), 283–306 (TKMK…IGNL), 308–329 (DAAE…EFGH), 330–354 (ILNL…LGEL), 355–379 (TLLE…QFLP), 381–402 (LVDL…IGFY), 403–426 (SNFS…FCRF), 427–450 (QTLI…LKTC), 451–474 (KSLT…LFNL), 476–498 (NLTA…LGKL), 499–522 (KNLE…IGNL), 524–546 (KIVG…LGSC), 548–569 (TIQR…ELGQ), 570–593 (LVYL…SFGD), 595–618 (TRLM…LGKL), 619–643 (TSLQ…LGNL), 644–667 (QMLE…IGNL), and 669–692 (SLLI…VFQR). Asn-161 and Asn-174 each carry an N-linked (GlcNAc...) asparagine glycan. 2 N-linked (GlcNAc...) asparagine glycosylation sites follow: Asn-236 and Asn-257. Asn-368 carries an N-linked (GlcNAc...) asparagine glycan. Residue Asn-404 is glycosylated (N-linked (GlcNAc...) asparagine). Residues Asn-476, Asn-490, Asn-510, Asn-521, and Asn-529 are each glycosylated (N-linked (GlcNAc...) asparagine). Asn-626 and Asn-631 each carry an N-linked (GlcNAc...) asparagine glycan. N-linked (GlcNAc...) asparagine glycosylation is found at Asn-674 and Asn-728. Residues 735-755 (ILTITCIVIGSVFLITFLGLC) form a helical membrane-spanning segment. Residues 756-1101 (WTIKRREPAF…LEEANSSKEI (346 aa)) lie on the Cytoplasmic side of the membrane. 2 positions are modified to phosphothreonine: Thr-788 and Thr-796. Residues 799–1081 (FSEDVVLGRG…ITEARGSSSL (283 aa)) form the Protein kinase domain. ATP is bound by residues 805-813 (LGRGACGTV) and Lys-827. Residues Tyr-874 and Tyr-913 each carry the phosphotyrosine modification. The Proton acceptor role is filled by Asp-926. Ser-960 bears the Phosphoserine mark. Phosphotyrosine occurs at positions 968 and 975. Phosphothreonine is present on Thr-976. The disordered stretch occupies residues 1076-1101 (RGSSSLSSSSITSETPLEEANSSKEI). Residues 1078–1088 (SSSLSSSSITS) show a composition bias toward low complexity.

Belongs to the protein kinase superfamily. Ser/Thr protein kinase family.

It is found in the cell membrane. It carries out the reaction L-seryl-[protein] + ATP = O-phospho-L-seryl-[protein] + ADP + H(+). It catalyses the reaction L-threonyl-[protein] + ATP = O-phospho-L-threonyl-[protein] + ADP + H(+). The protein is Leucine-rich repeat receptor-like serine/threonine-protein kinase At1g17230 of Arabidopsis thaliana (Mouse-ear cress).